Reading from the N-terminus, the 165-residue chain is Large ribosomal subunit protein uL10 (165 aa).

It belongs to the universal ribosomal protein uL10 family. As to quaternary structure, part of the ribosomal stalk of the 50S ribosomal subunit. The N-terminus interacts with L11 and the large rRNA to form the base of the stalk. The C-terminus forms an elongated spine to which L12 dimers bind in a sequential fashion forming a multimeric L10(L12)X complex.

Its function is as follows. Forms part of the ribosomal stalk, playing a central role in the interaction of the ribosome with GTP-bound translation factors. In Mycoplasma mycoides subsp. mycoides SC (strain CCUG 32753 / NCTC 10114 / PG1), this protein is Large ribosomal subunit protein uL10.